The sequence spans 391 residues: Processive diacylglycerol beta-glucosyltransferase (391 aa).

The protein belongs to the glycosyltransferase 28 family. UgtP subfamily.

It is found in the cell membrane. It carries out the reaction a 1,2-diacyl-3-O-(beta-D-glucopyranosyl)-sn-glycerol + UDP-alpha-D-glucose = a 1,2-diacyl-3-O-(beta-D-Glc-(1-&gt;6)-beta-D-Glc)-sn-glycerol + UDP + H(+). The enzyme catalyses a 1,2-diacyl-sn-glycerol + UDP-alpha-D-glucose = a 1,2-diacyl-3-O-(beta-D-glucopyranosyl)-sn-glycerol + UDP + H(+). It participates in glycolipid metabolism; diglucosyl-diacylglycerol biosynthesis. In terms of biological role, processive glucosyltransferase involved in the biosynthesis of both the bilayer- and non-bilayer-forming membrane glucolipids. Is able to successively transfer two glucosyl residues to diacylglycerol (DAG), thereby catalyzing the formation of beta-monoglucosyl-DAG (3-O-(beta-D-glucopyranosyl)-1,2-diacyl-sn-glycerol) and beta-diglucosyl-DAG (3-O-(beta-D-glucopyranosyl-beta-(1-&gt;6)-D-glucopyranosyl)-1,2-diacyl-sn-glycerol). Beta-diglucosyl-DAG is the predominant glycolipid found in Bacillales and is also used as a membrane anchor for lipoteichoic acid (LTA). This chain is Processive diacylglycerol beta-glucosyltransferase, found in Staphylococcus aureus (strain Mu3 / ATCC 700698).